Consider the following 556-residue polypeptide: 2-succinyl-5-enolpyruvyl-6-hydroxy-3-cyclohexene-1-carboxylate synthase (556 aa).

Belongs to the TPP enzyme family. MenD subfamily. In terms of assembly, homodimer. Mg(2+) is required as a cofactor. Requires Mn(2+) as cofactor. Thiamine diphosphate serves as cofactor.

The enzyme catalyses isochorismate + 2-oxoglutarate + H(+) = 5-enolpyruvoyl-6-hydroxy-2-succinyl-cyclohex-3-ene-1-carboxylate + CO2. It participates in quinol/quinone metabolism; 1,4-dihydroxy-2-naphthoate biosynthesis; 1,4-dihydroxy-2-naphthoate from chorismate: step 2/7. Its pathway is quinol/quinone metabolism; menaquinone biosynthesis. Catalyzes the thiamine diphosphate-dependent decarboxylation of 2-oxoglutarate and the subsequent addition of the resulting succinic semialdehyde-thiamine pyrophosphate anion to isochorismate to yield 2-succinyl-5-enolpyruvyl-6-hydroxy-3-cyclohexene-1-carboxylate (SEPHCHC). This chain is 2-succinyl-5-enolpyruvyl-6-hydroxy-3-cyclohexene-1-carboxylate synthase, found in Salmonella dublin (strain CT_02021853).